The following is an 876-amino-acid chain: MSQVIDSKHTPMMQQYLRLKAEAGPLLLFYRMGDFYEMFYEDAERAARLLNLTLTKRGNSNGTPIPMAGIPVHAMEQYLARLVALGESVAICEQIGDPAAAKGPVERRIVRIVTPGTLTDEALLPAKADRALAAVCVTGKREPRAGLAWLNLASGAFHVTECAPGQLESELHRIAPAELIQAESAELHMAFEGARTRVPDWHFEADGARAQLLAHFKTDSLGGFDVEDMPAAVCAAGALLRYAARTQSQALAHVQTIAAERPGQYVLLDPVTRRNLELTQTLSGEESPTLFSLLDGCRTPMGSRLLRRWLHHPLRENEPVLARQHAIATMLTARQEGEQAFAAAALLETLRDALNAFPDIERIAARVALRSVRPRELASLRDALVALPALHASLAPLSGSPRARELAAQLAMPPDIGELLARAVASEPAVAIRDGGVIAAGFDSELDELRALATDGGDFLVQLEARERERTGIGNLRVEFNRVHGFYIEVSKGQTDKVPEDYRRRQTLKNAERYITPELKTWEDRVLSAQDRSLAREKWLYEQLLDALAQYVRPLSQCASALAELDTLAALAEHARRHDWVAPELIDGAEIDIEAGRHPVVERAIERFTPNGCRLDQTRRMLLITGPNMGGKSTYMRQVALIALLARTGSFVPATRARVGRLDRIFTRIGAADDLAGGRSTFMMEMTEAAAILAASTPASLVLMDEIGRGTSTYDGLALAWAIAYRLLTHNRALTLFATHYFELTRLPAEQPTAANVHLAAAESAGGIVFLHEVREGPASRSYGIQVAQRAGVPAAVIRQASRELERLEAQGAPTPQLGLFAAALDADVQSQAMTEQAEDAAALAQLRDQLAAIDPDSLTPREALDALYRLKQHLT.

626 to 633 serves as a coordination point for ATP; sequence GPNMGGKS.

Belongs to the DNA mismatch repair MutS family.

Its function is as follows. This protein is involved in the repair of mismatches in DNA. It is possible that it carries out the mismatch recognition step. This protein has a weak ATPase activity. This Bordetella bronchiseptica (strain ATCC BAA-588 / NCTC 13252 / RB50) (Alcaligenes bronchisepticus) protein is DNA mismatch repair protein MutS.